The primary structure comprises 197 residues: Negative modulator of initiation of replication (197 aa).

Interaction with DNA regions lie at residues 100 to 101, 129 to 133, and 163 to 169; these read AV, RTRVY, and NTNSGRK.

This sequence belongs to the SeqA family. Homodimer. Polymerizes to form helical filaments.

The protein localises to the cytoplasm. Negative regulator of replication initiation, which contributes to regulation of DNA replication and ensures that replication initiation occurs exactly once per chromosome per cell cycle. Binds to pairs of hemimethylated GATC sequences in the oriC region, thus preventing assembly of replication proteins and re-initiation at newly replicated origins. Repression is relieved when the region becomes fully methylated. The protein is Negative modulator of initiation of replication of Haemophilus influenzae (strain ATCC 51907 / DSM 11121 / KW20 / Rd).